The sequence spans 78 residues: Acyl carrier protein (78 aa).

In terms of domain architecture, Carrier spans 2–77 (SEIASRVKAI…DAVSYIEANA (76 aa)). S37 carries the O-(pantetheine 4'-phosphoryl)serine modification.

This sequence belongs to the acyl carrier protein (ACP) family. In terms of processing, 4'-phosphopantetheine is transferred from CoA to a specific serine of apo-ACP by AcpS. This modification is essential for activity because fatty acids are bound in thioester linkage to the sulfhydryl of the prosthetic group.

It is found in the cytoplasm. The protein operates within lipid metabolism; fatty acid biosynthesis. Carrier of the growing fatty acid chain in fatty acid biosynthesis. The chain is Acyl carrier protein from Phocaeicola vulgatus (strain ATCC 8482 / DSM 1447 / JCM 5826 / CCUG 4940 / NBRC 14291 / NCTC 11154) (Bacteroides vulgatus).